Consider the following 439-residue polypeptide: COBRA-like protein 7 (439 aa).

The N-terminal stretch at 1–22 (MDVDQLILFVFVCCLSSRFADA) is a signal peptide. Asn138, Asn181, Asn186, Asn232, Asn312, and Asn346 each carry an N-linked (GlcNAc...) asparagine glycan. A lipid anchor (GPI-anchor amidated asparagine) is attached at Asn412. A propeptide spans 413–439 (GGPDSRVSAAQLIASSCLLLPFIFLIM) (removed in mature form).

It belongs to the COBRA family.

It is found in the cell membrane. In terms of biological role, involved in determining the orientation of cell expansion, probably by playing an important role in cellulose deposition. May act by recruiting cellulose synthesizing complexes to discrete positions on the cell surface. This is COBRA-like protein 7 (BC1LP1) from Oryza sativa subsp. japonica (Rice).